Consider the following 406-residue polypeptide: Imidazolonepropionase (406 aa).

Positions 74 and 76 each coordinate Fe(3+). 2 residues coordinate Zn(2+): H74 and H76. The 4-imidazolone-5-propanoate site is built by R83, Y146, and H179. Residue Y146 coordinates N-formimidoyl-L-glutamate. Residue H240 coordinates Fe(3+). H240 contacts Zn(2+). E243 is a binding site for 4-imidazolone-5-propanoate. D314 lines the Fe(3+) pocket. D314 serves as a coordination point for Zn(2+). N-formimidoyl-L-glutamate-binding residues include N316 and G318. S319 contacts 4-imidazolone-5-propanoate.

The protein belongs to the metallo-dependent hydrolases superfamily. HutI family. It depends on Zn(2+) as a cofactor. Fe(3+) is required as a cofactor.

The protein localises to the cytoplasm. It carries out the reaction 4-imidazolone-5-propanoate + H2O = N-formimidoyl-L-glutamate. The protein operates within amino-acid degradation; L-histidine degradation into L-glutamate; N-formimidoyl-L-glutamate from L-histidine: step 3/3. Catalyzes the hydrolytic cleavage of the carbon-nitrogen bond in imidazolone-5-propanoate to yield N-formimidoyl-L-glutamate. It is the third step in the universal histidine degradation pathway. The sequence is that of Imidazolonepropionase from Kosmotoga olearia (strain ATCC BAA-1733 / DSM 21960 / TBF 19.5.1).